Here is a 250-residue protein sequence, read N- to C-terminus: Tryptophan synthase alpha chain (250 aa).

Active-site proton acceptor residues include Glu31 and Asp42.

The protein belongs to the TrpA family. Tetramer of two alpha and two beta chains.

It carries out the reaction (1S,2R)-1-C-(indol-3-yl)glycerol 3-phosphate + L-serine = D-glyceraldehyde 3-phosphate + L-tryptophan + H2O. It participates in amino-acid biosynthesis; L-tryptophan biosynthesis; L-tryptophan from chorismate: step 5/5. Functionally, the alpha subunit is responsible for the aldol cleavage of indoleglycerol phosphate to indole and glyceraldehyde 3-phosphate. The chain is Tryptophan synthase alpha chain from Staphylococcus carnosus (strain TM300).